The following is a 2669-amino-acid chain: Nucleosome-remodeling factor subunit NURF301 (2669 aa).

The segment covering 1–12 (MSGRGSRKRGRP) has biased composition (basic residues). The segment at 1–121 (MSGRGSRKRG…EEDKSDNEDD (121 aa)) is required for function in nucleosome sliding. The interval 1 to 125 (MSGRGSRKRG…SDNEDDMLLT (125 aa)) is disordered. The a.T hook DNA-binding region spans 6 to 18 (SRKRGRPPKTPNE). Over residues 38-56 (GKSQPSTPSASRGISPQSD) the composition is skewed to polar residues. Serine 40, serine 52, serine 55, serine 59, and serine 62 each carry phosphoserine. Basic residues predominate over residues 66–82 (HTNRSRGSAAKRGRGRK). The span at 109–125 (GDSEEDKSDNEDDMLLT) shows a compositional bias: acidic residues. Residues 188–248 (NTHVLRALSI…LKAILREEDA (61 aa)) form the DDT domain. Residues 339–386 (DDHCRVCHRLGDLLCCETCPAVYHLECVDPPMNDVPTEDWQCGLCRSH) form a PHD-type 1 zinc finger. A coiled-coil region spans residues 460-515 (RLHSQITERRDEIERQMKLTETLTNEHKHTKRSVIEIEQEAKNELLEKEVLDEDEK). Residues 505–538 (LEKEVLDEDEKDGDAKSESQSIEGTKKQEECKMV) are disordered. Residues 528 to 537 (GTKKQEECKM) show a composition bias toward basic and acidic residues. Residues 688 to 720 (LQRITSAEREERKKLEKREKRERDDEEERNRLA) are a coiled coil. Disordered stretches follow at residues 1026 to 1048 (EGKR…AESE), 1135 to 1159 (TGLN…NQKS), and 1406 to 1425 (RSGL…EPQI). Serine 1417 bears the Phosphoserine mark. Threonine 1527 carries the phosphothreonine modification. Low complexity predominate over residues 1559–1590 (SRTGGANTAAAAASPTVGGSTSTQSNPSTSTP). 3 disordered regions span residues 1559–1596 (SRTG…VQII), 2181–2203 (INNG…ITTN), and 2283–2307 (TNEW…QTDD). Residues 2283–2293 (TNEWETCSRGS) are compositionally biased toward polar residues. The stretch at 2338–2373 (KNDEVAELGEQKQSQLERHKELLKKNILRKRSLLER) forms a coiled coil. Positions 2382-2432 (DVKTKVQRHVRPLSNASPDEQSENERSGEPNLDFKRTEVQNPRHGAGRPKK) are disordered. A phosphoserine mark is found at serine 2395, serine 2398, and serine 2403. Over residues 2404–2419 (ENERSGEPNLDFKRTE) the composition is skewed to basic and acidic residues. The PHD-type 2 zinc-finger motif lies at 2481–2546 (EFICIDCKRA…EYVCPECQRK (66 aa)). Residues 2556–2660 (KLTSNDVEEL…SYFVQKIKNF (105 aa)) form the Bromo domain.

This sequence belongs to the BPTF family. In terms of assembly, component of the NURF complex composed of Caf1-55, E(bx), Nurf-38 and Iswi. Interacts with Trl. Interacts with histone H3-K4Me3.

The protein resides in the nucleus. In terms of biological role, histone-binding component of NURF (nucleosome remodeling factor), a complex which catalyzes ATP-dependent nucleosome sliding and facilitates transcription of chromatin. Specifically recognizes H3 tails trimethylated on 'Lys-4' (H3K4me3), which mark transcription start sites of virtually all active genes. Required for homeotic gene expression, proper larval blood cell development, normal male X chromosome morphology, ecdysteroid signaling and metamorphosis. The sequence is that of Nucleosome-remodeling factor subunit NURF301 (E(bx)) from Drosophila melanogaster (Fruit fly).